Here is a 1057-residue protein sequence, read N- to C-terminus: Self-sufficient cytochrome P450 monooxygenase CYP505E3 (1057 aa).

C403 is a heme binding site. The interval P465–T488 is disordered. One can recognise a Flavodoxin-like domain in the interval M494–W634. FMN is bound by residues S500–T504 and V578–V610. An FAD-binding FR-type domain is found at H671 to P900.

This sequence in the N-terminal section; belongs to the cytochrome P450 family. FAD serves as cofactor. FMN is required as a cofactor. The cofactor is heme.

It carries out the reaction 2 oxidized [cytochrome P450] + NADPH = 2 reduced [cytochrome P450] + NADP(+) + H(+). It catalyses the reaction an organic molecule + reduced [NADPH--hemoprotein reductase] + O2 = an alcohol + oxidized [NADPH--hemoprotein reductase] + H2O + H(+). The catalysed reaction is dodecan-1-ol + reduced [NADPH--hemoprotein reductase] + O2 = 1,5-dodecanediol + oxidized [NADPH--hemoprotein reductase] + H2O + H(+). The enzyme catalyses dodecan-1-ol + reduced [NADPH--hemoprotein reductase] + O2 = 1,6-dodecanediol + oxidized [NADPH--hemoprotein reductase] + H2O + H(+). In terms of biological role, self-sufficient cytochrome P450 monooxygenase that catalyzes the regioselective in-chain hydroxylation of fatty alcohols (C9-15) as well as fatty acids (C9-15) at the omega-1 to omega-7 or omega-1 to omega-6 positions, respectively. Is also able to convert naphthalene to 1-naphthol and 1-naphthol further to 1,3-dihydroxynaphthalene. The chain is Self-sufficient cytochrome P450 monooxygenase CYP505E3 from Phanerodontia chrysosporium (White-rot fungus).